The sequence spans 114 residues: uncharacterized protein (114 aa).

Its function is as follows. Possibly involved in pGI2 replication mechanism. This is an uncharacterized protein from Bacillus thuringiensis.